The chain runs to 408 residues: Indian hedgehog protein (408 aa).

Positions 1-23 are cleaved as a signal peptide; that stretch reads MKPARLLLLLSGCALLLAPAVRC. The N-palmitoyl cysteine moiety is linked to residue Cys-24. Positions 90, 91, 96, 126, 127, 130, and 132 each coordinate Ca(2+). His-141, Asp-148, and His-183 together coordinate Zn(2+). A lipid anchor (Cholesterol glycine ester) is attached at Gly-198.

Belongs to the hedgehog family. In terms of assembly, multimer. Interacts with BOC and CDON. Interacts with PTCH1. Interacts with glypican GPC3. Cholesterylation is required for N-product targeting to lipid rafts and multimerization. In terms of processing, the C-terminal domain displays an autoproteolysis activity and a cholesterol transferase activity. Both activities result in the cleavage of the full-length protein and covalent attachment of a cholesterol moiety to the C-terminal of the newly generated N-product. The N-product is the active species in both local and long-range signaling, whereas the C-product is degraded in the endoplasmic reticulum. Post-translationally, N-palmitoylation by HHAT of N-product is required for indian hedgehog protein N-product multimerization and full activity. Expressed in developing midgut, lung and cartilage of developing long bones in the limb.

It localises to the cell membrane. The protein resides in the endoplasmic reticulum membrane. It is found in the golgi apparatus membrane. Its subcellular location is the secreted. It catalyses the reaction glycyl-L-cysteinyl-[protein] + cholesterol + H(+) = [protein]-C-terminal glycyl cholesterol ester + N-terminal L-cysteinyl-[protein]. Plays a role in embryonic morphogenesis; it is involved in the regulation of endochondral skeleton formation, and the development of retinal pigment epithelium (RPE), photoreceptors and periocular tissues. Functionally, the C-terminal part of the indian hedgehog protein precursor displays an autoproteolysis and a cholesterol transferase activity. Both activities result in the cleavage of the full-length protein into two parts followed by the covalent attachment of a cholesterol moiety to the C-terminal of the newly generated N-product. Both activities occur in the endoplasmic reticulum. In terms of biological role, the dually lipidated indian hedgehog protein N-product is a morphogen which is essential for a variety of patterning events during development. Binds to the patched (PTCH1) receptor, which functions in association with smoothened (SMO), to activate the transcription of target genes. Plays a role in morphogenesis of the skeleton by coordinating growth and differentiation of the endochondral skeleton. Positively regulates PTHLH expression during endochondral bone formation preventing chondrocyte hypertrophy. In contrast, participates in normal chondrocyte proliferation in a PTHLH-independent pathway. In Gallus gallus (Chicken), this protein is Indian hedgehog protein.